A 139-amino-acid chain; its full sequence is uncharacterized protein (139 aa).

Residues 22-38 traverse the membrane as a helical segment; that stretch reads SVMSVCFMTMSATVLPI.

It localises to the membrane. This is an uncharacterized protein from Saccharomyces cerevisiae (strain ATCC 204508 / S288c) (Baker's yeast).